We begin with the raw amino-acid sequence, 197 residues long: Thymidylate kinase (197 aa).

Residue 7 to 14 (GIDGSGKS) participates in ATP binding.

Belongs to the thymidylate kinase family.

It catalyses the reaction dTMP + ATP = dTDP + ADP. In terms of biological role, phosphorylation of dTMP to form dTDP in both de novo and salvage pathways of dTTP synthesis. The chain is Thymidylate kinase (tmk) from Thermotoga maritima (strain ATCC 43589 / DSM 3109 / JCM 10099 / NBRC 100826 / MSB8).